A 380-amino-acid chain; its full sequence is 1-deoxy-D-xylulose 5-phosphate reductoisomerase 2 (380 aa).

NADPH-binding residues include Ser-10, Gly-11, Ser-12, Ile-13, Gly-36, Lys-37, Asn-38, and Asn-120. 1-deoxy-D-xylulose 5-phosphate is bound at residue Lys-121. Residue Glu-122 coordinates NADPH. Asp-146 serves as a coordination point for Mn(2+). Ser-147, Glu-148, Ser-172, and His-195 together coordinate 1-deoxy-D-xylulose 5-phosphate. Glu-148 lines the Mn(2+) pocket. Gly-201 provides a ligand contact to NADPH. Residues Ser-208, Asn-213, Lys-214, and Glu-217 each coordinate 1-deoxy-D-xylulose 5-phosphate. Residue Glu-217 participates in Mn(2+) binding.

This sequence belongs to the DXR family. The cofactor is Mg(2+). Mn(2+) is required as a cofactor.

It catalyses the reaction 2-C-methyl-D-erythritol 4-phosphate + NADP(+) = 1-deoxy-D-xylulose 5-phosphate + NADPH + H(+). It functions in the pathway isoprenoid biosynthesis; isopentenyl diphosphate biosynthesis via DXP pathway; isopentenyl diphosphate from 1-deoxy-D-xylulose 5-phosphate: step 1/6. In terms of biological role, catalyzes the NADPH-dependent rearrangement and reduction of 1-deoxy-D-xylulose-5-phosphate (DXP) to 2-C-methyl-D-erythritol 4-phosphate (MEP). This is 1-deoxy-D-xylulose 5-phosphate reductoisomerase 2 from Bacillus thuringiensis subsp. konkukian (strain 97-27).